The sequence spans 1790 residues: Non-reducing polyketide synthase gsfA (1790 aa).

Residues 20 to 263 (GDQRTLFRKL…AMRKIQGMWH (244 aa)) form an N-terminal acylcarrier protein transacylase domain (SAT) region. Residues 392–822 (SSKIAVVGMS…GGNTAMIIEE (431 aa)) form the Ketosynthase family 3 (KS3) domain. Catalysis depends on for beta-ketoacyl synthase activity residues Cys-563, His-698, and His-741. Residues 922–1223 (FAFAGQGTFY…CSTLHRDSDN (302 aa)) form a malonyl-CoA:ACP transacylase (MAT) domain region. Positions 1298 to 1615 (TSSIHRLYSE…PRIMLNRFFQ (318 aa)) are product template (PT) domain. The segment at 1302-1435 (HRLYSENYDS…AYYEDPSTWL (134 aa)) is N-terminal hotdog fold. The PKS/mFAS DH domain occupies 1302-1611 (HRLYSENYDS…FRQWPRIMLN (310 aa)). The active-site Proton acceptor; for dehydratase activity is the His-1334. The segment at 1460 to 1611 (MANKLTTSLA…FRQWPRIMLN (152 aa)) is C-terminal hotdog fold. The Proton donor; for dehydratase activity role is filled by Asp-1518. Disordered stretches follow at residues 1621–1648 (PPAPRVEKKRDAGRGTLPSSSSLQEKTT) and 1686–1718 (LDYSLLTPRTSPNSDERIEKTDSDSGFEEADGA). Residues 1699-1708 (SDERIEKTDS) show a composition bias toward basic and acidic residues. Residues 1716 to 1790 (DGANDVTSRA…TIGDLKKLLS (75 aa)) enclose the Carrier domain. An O-(pantetheine 4'-phosphoryl)serine modification is found at Ser-1753.

It carries out the reaction 6 malonyl-CoA + acetyl-CoA + 4 H(+) = 2-(2,4-dihydroxy-6-oxidobenzoyl)-5-hydroxy-3-methylbenzenolate + 6 CO2 + 7 CoA + H2O. The protein operates within secondary metabolite biosynthesis; terpenoid biosynthesis. In terms of biological role, norlichexanthone synthase; part of the gene cluster that mediates the biosynthesis of griseofulvin, an important antifungal drug that has been in use for a long time for treating dermatophyte infections. The first step of the pathway is the formation of the heptaketide backbone by gsfA which is initiated by priming with acetyl-CoA, followed by sequential condensations of 6 malonyl-CoA units. The resulting benzophenone can undergo a spontaneous dehydration to form norlichexanthone. However, the true precursor for the griseofulvin biosynthesis is not norlichexanthone, but the heptaketide benzophenone that is O-methylated at 3-OH by gsfB to produce griseophenone D which is further methylated at 9-OH by gsfC to yield griseophenone C. Griseophenone C is then substrate of halogenase gsfI which is responsible for the regio-specific chlorination at the C13 position to form griseophenone B. The cytochrome P450 gsfF catalyzes the coupling of orcinol and phloroglucinol rings in griseophenone B to form desmethyl-dehydrogriseofulvin A which is further methylated at 5-OH by gsfD to yield dehydrogriseofulvin. Finally, gsfE performs stereospecific reduction of enone 18 of dehydrogriseofulvin to afford the final product griseofulvin. The chain is Non-reducing polyketide synthase gsfA from Penicillium aethiopicum.